A 446-amino-acid polypeptide reads, in one-letter code: ATP-dependent protease ATPase subunit HslU (446 aa).

ATP is bound by residues Val-18, 60–65 (GVGKTE), Asp-259, Glu-324, and Arg-396.

This sequence belongs to the ClpX chaperone family. HslU subfamily. As to quaternary structure, a double ring-shaped homohexamer of HslV is capped on each side by a ring-shaped HslU homohexamer. The assembly of the HslU/HslV complex is dependent on binding of ATP.

It is found in the cytoplasm. Its function is as follows. ATPase subunit of a proteasome-like degradation complex; this subunit has chaperone activity. The binding of ATP and its subsequent hydrolysis by HslU are essential for unfolding of protein substrates subsequently hydrolyzed by HslV. HslU recognizes the N-terminal part of its protein substrates and unfolds these before they are guided to HslV for hydrolysis. The polypeptide is ATP-dependent protease ATPase subunit HslU (Acidovorax sp. (strain JS42)).